Here is a 226-residue protein sequence, read N- to C-terminus: ATP-dependent dethiobiotin synthetase BioD (226 aa).

12 to 17 (GIGKTV) lines the ATP pocket. Thr-16 lines the Mg(2+) pocket. The active site involves Lys-37. Thr-41 is a substrate binding site. Residues Asp-49, 108-111 (EGAG), 169-170 (GS), and 197-199 (PAG) each bind ATP. 2 residues coordinate Mg(2+): Asp-49 and Glu-108.

It belongs to the dethiobiotin synthetase family. Homodimer. The cofactor is Mg(2+).

It is found in the cytoplasm. It carries out the reaction (7R,8S)-7,8-diammoniononanoate + CO2 + ATP = (4R,5S)-dethiobiotin + ADP + phosphate + 3 H(+). Its pathway is cofactor biosynthesis; biotin biosynthesis; biotin from 7,8-diaminononanoate: step 1/2. In terms of biological role, catalyzes a mechanistically unusual reaction, the ATP-dependent insertion of CO2 between the N7 and N8 nitrogen atoms of 7,8-diaminopelargonic acid (DAPA, also called 7,8-diammoniononanoate) to form a ureido ring. The sequence is that of ATP-dependent dethiobiotin synthetase BioD from Mycolicibacterium gilvum (strain PYR-GCK) (Mycobacterium gilvum (strain PYR-GCK)).